A 307-amino-acid polypeptide reads, in one-letter code: Ribosomal RNA small subunit methyltransferase H (307 aa).

S-adenosyl-L-methionine contacts are provided by residues 34-36, aspartate 54, phenylalanine 79, aspartate 101, and glutamine 108; that span reads GGH.

Belongs to the methyltransferase superfamily. RsmH family.

It localises to the cytoplasm. It carries out the reaction cytidine(1402) in 16S rRNA + S-adenosyl-L-methionine = N(4)-methylcytidine(1402) in 16S rRNA + S-adenosyl-L-homocysteine + H(+). Its function is as follows. Specifically methylates the N4 position of cytidine in position 1402 (C1402) of 16S rRNA. The chain is Ribosomal RNA small subunit methyltransferase H from Vesicomyosocius okutanii subsp. Calyptogena okutanii (strain HA).